Here is a 230-residue protein sequence, read N- to C-terminus: Probable methylthioribulose-1-phosphate dehydratase (230 aa).

Cys87 is a substrate binding site. Positions 105 and 107 each coordinate Zn(2+). Catalysis depends on Glu129, which acts as the Proton donor/acceptor. His185 provides a ligand contact to Zn(2+).

The protein belongs to the aldolase class II family. MtnB subfamily. It depends on Zn(2+) as a cofactor.

It localises to the cytoplasm. The enzyme catalyses 5-(methylsulfanyl)-D-ribulose 1-phosphate = 5-methylsulfanyl-2,3-dioxopentyl phosphate + H2O. Its pathway is amino-acid biosynthesis; L-methionine biosynthesis via salvage pathway; L-methionine from S-methyl-5-thio-alpha-D-ribose 1-phosphate: step 2/6. Catalyzes the dehydration of methylthioribulose-1-phosphate (MTRu-1-P) into 2,3-diketo-5-methylthiopentyl-1-phosphate (DK-MTP-1-P). The polypeptide is Probable methylthioribulose-1-phosphate dehydratase (Drosophila virilis (Fruit fly)).